Here is an 86-residue protein sequence, read N- to C-terminus: RNA-binding protein Hfq (86 aa).

A Sm domain is found at 9–68 (DPYLNTLRKEKVGVSIYLVNGIKLQGTIESFDQFVILLKNTVSQMVYKHAISTVVPVRPI).

It belongs to the Hfq family. Homohexamer.

RNA chaperone that binds small regulatory RNA (sRNAs) and mRNAs to facilitate mRNA translational regulation in response to envelope stress, environmental stress and changes in metabolite concentrations. Also binds with high specificity to tRNAs. The polypeptide is RNA-binding protein Hfq (Pseudomonas fluorescens (strain ATCC BAA-477 / NRRL B-23932 / Pf-5)).